Here is an 818-residue protein sequence, read N- to C-terminus: Serine/threonine-protein phosphatase 4 regulatory subunit 3 (818 aa).

In terms of domain architecture, WH1 spans 1-100 (MTDTRRRVKV…DEIWEKICQV (100 aa)). Residues 670-681 (FNTDEEDLEDGE) show a composition bias toward acidic residues. The interval 670-818 (FNTDEEDLED…PLSKKSKLSS (149 aa)) is disordered. Basic and acidic residues predominate over residues 703 to 718 (FMERKKLKDSEEKEVL). The span at 729–775 (SPSFKLSFSSSPKASLSSPPTASLHPGSPGSPSSPGTGARSSPPSAA) shows a compositional bias: low complexity. 2 positions are modified to phosphoserine: serine 769 and serine 770. Acidic residues predominate over residues 788–803 (YPDDDEEDEDEEDADS).

It belongs to the SMEK family. In terms of assembly, serine/threonine-protein phosphatase 4 (PP4) occurs in different assemblies of the catalytic and one or more regulatory subunits.

Regulatory subunit of serine/threonine-protein phosphatase 4. This Danio rerio (Zebrafish) protein is Serine/threonine-protein phosphatase 4 regulatory subunit 3 (smek1).